The sequence spans 277 residues: Putative serine/threonine-protein kinase PRKY (277 aa).

Residues 1 to 12 (MEAPGPAQAAAA) are compositionally biased toward low complexity. Residues 1–40 (MEAPGPAQAAAAESNSREVTEDAADWAPALCPSPEARSPE) are disordered. The region spanning 49-277 (CDALVTMGTG…DFHVKTGRMM (229 aa)) is the Protein kinase domain. ATP contacts are provided by residues 55-63 (MGTGTFGRV) and lysine 78. Aspartate 172 acts as the Proton acceptor in catalysis. Position 203 is a phosphothreonine (threonine 203).

It belongs to the protein kinase superfamily. AGC Ser/Thr protein kinase family. cAMP subfamily. As to expression, ubiquitous.

It catalyses the reaction L-seryl-[protein] + ATP = O-phospho-L-seryl-[protein] + ADP + H(+). The enzyme catalyses L-threonyl-[protein] + ATP = O-phospho-L-threonyl-[protein] + ADP + H(+). This Homo sapiens (Human) protein is Putative serine/threonine-protein kinase PRKY (PRKY).